Reading from the N-terminus, the 1614-residue chain is Protein scribble homolog (1614 aa).

The sufficient for targeting to adherens junction and to inhibit cell proliferation stretch occupies residues 1 to 809; the sequence is MLKCIPLWRC…MRLWRERMVE (809 aa). LRR repeat units follow at residues 11 to 34, 35 to 58, 59 to 81, 83 to 105, 107 to 127, 128 to 150, 151 to 173, 174 to 196, 197 to 219, 221 to 242, 243 to 265, 267 to 288, 289 to 311, 312 to 334, 336 to 357, 359 to 380, and 382 to 405; these read NRHV…IYRY, SRSL…FFRL, LNLR…VANF, QLVE…KFCK, LEIA…FTQL, RSLA…VGNL, ANLV…LSFL, VKLE…LGAL, PNLR…LGNL, RLVC…LGGL, LLLT…IGQL, QLSI…IGDC, ENLS…LGKL, TKLT…IGGC, ALSV…LAHT, ELHV…LTHL, and LKAL…DDAQ. Ser-37 is modified (phosphoserine). The residue at position 378 (Thr-378) is a Phosphothreonine. 3 disordered regions span residues 417-441, 462-608, and 636-692; these read PQQP…SDAP, GAAA…RLIR, and AQPD…VVSA. The segment covering 428–437 has biased composition (polar residues); sequence GLQSSPSESW. Thr-475 carries the phosphothreonine modification. Basic and acidic residues predominate over residues 479 to 494; that stretch reads SELKVMKRGVEERRGE. A compositionally biased stretch (polar residues) spans 516 to 533; that stretch reads TESGLSEDSQPSTGTASQ. The span at 548 to 557 shows a compositional bias: low complexity; sequence QQEAAPNAQE. Residues 662-686 are compositionally biased toward acidic residues; it reads EEEDEEDEEEDEEEEEVAVAEEDKE. Residues 664 to 691 are a coiled coil; that stretch reads EDEEDEEEDEEEEEVAVAEEDKEEAVVS. Phosphoserine occurs at positions 699 and 755. The tract at residues 708-1219 is interaction with ARHGEF7; the sequence is IEPARIEEEE…SLESVSSIDR (512 aa). In terms of domain architecture, PDZ 1 spans 719 to 806; that stretch reads TLTIVRQTGG…TVQMRLWRER (88 aa). Residues 719 to 1184 form a required for interaction with VIM region; it reads TLTIVRQTGG…TVLVCDGFDT (466 aa). Position 817 is a phosphothreonine (Thr-817). Ser-826, Ser-866, and Ser-930 each carry phosphoserine. A PDZ 2 domain is found at 853–941; that stretch reads VACLVRSEKG…TIALLLEREA (89 aa). The interval 940 to 971 is disordered; sequence EAGGPLPPSPLPHSPPPPVTAPSTVVTASPGE. Positions 944-959 are enriched in pro residues; the sequence is PLPPSPLPHSPPPPVT. Over residues 960–969 the composition is skewed to low complexity; sequence APSTVVTASP. PDZ domains are found at residues 994–1083 and 1090–1178; these read EICL…RRDP and ELCI…TVLV. Residues Ser-1130, Ser-1210, Ser-1213, Ser-1216, Ser-1222, Ser-1260, Ser-1268, and Ser-1271 each carry the phosphoserine modification. The disordered stretch occupies residues 1214-1448; that stretch reads VSSIDRELSP…LPDRALSPAE (235 aa). Over residues 1217–1232 the composition is skewed to basic and acidic residues; sequence IDRELSPEGCGKEKEP. Position 1304 is a phosphothreonine (Thr-1304). A Phosphoserine modification is found at Ser-1310. A compositionally biased stretch (basic and acidic residues) spans 1315-1327; sequence SFRERQKYFELEV. Position 1340 is a phosphoserine (Ser-1340). A coiled-coil region spans residues 1341-1368; it reads LVGADDLRKMQEEEARKLQQKRAQLMRE. Basic and acidic residues predominate over residues 1345–1357; that stretch reads DDLRKMQEEEARK. Residues 1378-1390 are compositionally biased toward acidic residues; that stretch reads LDGEAPDDEEPEE. A compositionally biased stretch (low complexity) spans 1396–1408; sequence GPAAGLSPSSPQP. Phosphoserine is present on residues Ser-1402 and Ser-1405. Basic and acidic residues predominate over residues 1418–1429; it reads AKAERRHQERLR. A phosphoserine mark is found at Ser-1432, Ser-1445, and Ser-1467. Residues 1476-1524 are disordered; it reads QMVLSKSQEGRSRRGPLERLAEAPSPAPTPSPTPVEDLGLQTSTSPGRL. The segment covering 1483–1496 has biased composition (basic and acidic residues); that stretch reads QEGRSRRGPLERLA. The residue at position 1500 (Ser-1500) is a Phosphoserine. A Phosphothreonine modification is found at Thr-1504. 3 positions are modified to phosphoserine: Ser-1506, Ser-1520, and Ser-1550. The disordered stretch occupies residues 1581 to 1614; that stretch reads GRPSPGTVGPEEVTLCSSRRPVRPGRRGLGPVPS.

This sequence belongs to the LAP (LRR and PDZ) protein family. As to quaternary structure, interacts with UBE3A. Interacts with PAK1 and PAK2. Interacts (via PDZ domains) with VANGL2. Interacts (via PDZ domains) with LPP and TRIP6; the interaction is direct. Interacts (via PDZ domains) with TJP2. Interacts (via PDZ domains) with APC; may mediate APC targeting to adherens junctions of epithelial cells. Interacts (via PDZ domains) with TSHR; regulates TSHR trafficking and function. Interacts with ARHGEF7 and GIT1; interacts directly with ARHGEF7. Interacts with CTNNB1. Interacts with MAPK12. Interacts (via PDZ domains 1 and 3) with MCC. Interacts with DLG5. Interacts with STK4/MST1 and LATS1 in the presence of DLG5. Interacts (via PDZ domain 3) with CRTAM (via PDZ-binding motif); the interaction promotes CRTAM and SCRIB polarization in a subset of CD4+ T-cells. Interacts with YES1, when YES1 is in a closed conformation; the interaction facilitates YES1 autophosphorylation. Interacts (via PDZ domains) with VIM; the interaction protects SCRIB from proteasomal degradation and facilitates SCRIB localization to intermediate filaments, the interaction is reduced by cell contact inhibition. In terms of processing, ubiquitinated; targeted for UBE3A-dependent multiubiquitination and degraded. Post-translationally, palmitoylated. Could be depalmitoylated by LYPLA1 and/or LYPLA2. Palmitoylation of SCRIB by ZDHHC7 is required for its localization to cell-cell junctions, function in the establishement of epithelial cell polarity and the regulation of downstream signaling pathways important for epithelial cell differentiation.

The protein localises to the cell membrane. It is found in the cell junction. It localises to the adherens junction. Its subcellular location is the cell projection. The protein resides in the lamellipodium. The protein localises to the cytoplasm. It is found in the postsynapse. It localises to the presynapse. In terms of biological role, scaffold protein involved in different aspects of polarized cell differentiation regulating epithelial and neuronal morphogenesis and T-cell polarization. Via its interaction with CRTAM, required for the late phase polarization of a subset of CD4+ T-cells, which in turn regulates TCR-mediated proliferation and IFNG and IL22 production. Plays a role in cell directional movement, cell orientation, cell sheet organization and Golgi complex polarization at the cell migration front. Promotes epithelial cell layer barrier function via maintaining cell-cell adhesion. Most probably functions in the establishment of apico-basal cell polarity. May function in cell proliferation regulating progression from G1 to S phase and as a positive regulator of apoptosis for instance during acinar morphogenesis of the mammary epithelium. May regulate cell invasion via MAPK-mediated cell migration and adhesion. May play a role in exocytosis and in the targeting of synaptic vesicles to synapses. Functions as an activator of Rac GTPase activity. This chain is Protein scribble homolog, found in Canis lupus familiaris (Dog).